A 718-amino-acid chain; its full sequence is Origin of replication complex subunit 3 (718 aa).

The span at 26 to 43 shows a compositional bias: low complexity; the sequence is GAAASSSSSSAPSLPSSG. The tract at residues 26–75 is disordered; that stretch reads GAAASSSSSSAPSLPSSGRARRRIDVSGLASPNPKPGKRSRDDDAAEDDD. A Nuclear localization signal motif is present at residues 659–666; that stretch reads IKRKPHTS.

The protein belongs to the ORC3 family. As to quaternary structure, component of the origin recognition complex (ORC) composed of at least ORC1, ORC2, ORC3, ORC4, ORC5 and ORC6. ORC is regulated in a cell-cycle and development dependent manner. It is sequentially assembled at the exit from anaphase of mitosis and disassembled as cells enter S phase. Expressed at low levels in the shoot apical meristem (SAM), leaves, ears and roots (including root tips).

Its subcellular location is the nucleus. Functionally, component of the origin recognition complex (ORC) that binds origins of replication. DNA-binding is ATP-dependent. The specific DNA sequences that define origins of replication have not been identified yet. The chain is Origin of replication complex subunit 3 from Oryza sativa subsp. japonica (Rice).